The primary structure comprises 614 residues: Lamin-2 (614 aa).

The segment covering 1 to 10 (MSAQVSKKRG) has biased composition (basic residues). Residues 1-51 (MSAQVSKKRGGSNPPKTGQHAASSTTSRTESSATSQTIYERQEVETRTQRT) form a disordered region. A head region spans residues 1–76 (MSAQVSKKRG…GTAGLAGSPL (76 aa)). The segment covering 21–37 (AASSTTSRTESSATSQT) has biased composition (low complexity). Residues 77–117 (SRHQEKEEFKLLNNRFANYIDTIRAQQEEISVLRRKVETVS) are coil 1A. The IF rod domain maps to 81 to 433 (EKEEFKLLNN…ALLRTEEERL (353 aa)). The segment at 118-128 (SKEVVENQKIK) is linker 1. The segment at 129–268 (ERYNLEIANL…EEIVSLRNQR (140 aa)) is coil 1B. Positions 269–286 (RTEITEVETRMGEEYQSK) are linker 2. The interval 287–426 (IVEQLNDLRA…AELATYNALL (140 aa)) is coil 2. The segment at 427-611 (RTEEERLNMK…ADSSDHQKNC (185 aa)) is tail. The disordered stretch occupies residues 433 to 454 (LNMKSPPFPSTPDSQRRGTKRR). A Nuclear localization signal motif is present at residues 449 to 458 (RGTKRRIADS). Residues 462–581 (TRFRNEASAT…VARREMTQSS (120 aa)) enclose the LTD domain. A lipid anchor (S-farnesyl cysteine) is attached at Cys-611. Positions 612-614 (VIM) are cleaved as a propeptide — removed in mature form.

This sequence belongs to the intermediate filament family.

The protein localises to the nucleus inner membrane. Intermediate filament (IF) protein, component of the nuclear lamina, a fibrous layer on the nucleoplasmic side of the inner nuclear membrane, which is thought to provide a framework for the nuclear envelope. The polypeptide is Lamin-2 (Hypsibius exemplaris (Freshwater tardigrade)).